The following is a 246-amino-acid chain: Uridylate kinase (246 aa).

An ATP-binding site is contributed by 19–22; the sequence is KISG. Gly-61 is a UMP binding site. The ATP site is built by Gly-62 and Arg-66. UMP-binding positions include Asp-81 and 142 to 149; that span reads TGNPFFTT. Residues Thr-169, Gln-170, Tyr-175, and Asp-178 each contribute to the ATP site.

Belongs to the UMP kinase family. As to quaternary structure, homohexamer.

It localises to the cytoplasm. The catalysed reaction is UMP + ATP = UDP + ADP. Its pathway is pyrimidine metabolism; CTP biosynthesis via de novo pathway; UDP from UMP (UMPK route): step 1/1. Inhibited by UTP. In terms of biological role, catalyzes the reversible phosphorylation of UMP to UDP. This chain is Uridylate kinase, found in Wolbachia sp. subsp. Brugia malayi (strain TRS).